The primary structure comprises 353 residues: MIEQFQQVLASVKSVDMSLTKEVQAHLDDLTKPRGSLGRLEEIAMKYVLATGSLRPELRKKKVFCFAADHGVAVEGVSAFPAEVTPQMVYNMLAGGAAINVLSRHAGADLDVVDMGVHHDFVEHPSLRICKVRHGSSNMAEGPAMTMDETLQAIMTGVSLAHEARKEGYDLLATGEMGIANTTPATALYASMLDLPVEMITGRGTGIDDAVLQHKISVIKRALDVNSASLSTPLEQLAALGGFEIAGICGLILGAASVGMPVVVDGFISSAGAVAALKLSCRVSDYLFFSHLSNEQGHKAIMNRLGARPILDLDLRLGEGTGAALAMQVVEASVKLYNEMATFSSASVSGKSV.

The active-site Proton acceptor is glutamate 319.

The protein belongs to the CobT family.

The catalysed reaction is 5,6-dimethylbenzimidazole + nicotinate beta-D-ribonucleotide = alpha-ribazole 5'-phosphate + nicotinate + H(+). Its pathway is nucleoside biosynthesis; alpha-ribazole biosynthesis; alpha-ribazole from 5,6-dimethylbenzimidazole: step 1/2. Its function is as follows. Catalyzes the synthesis of alpha-ribazole-5'-phosphate from nicotinate mononucleotide (NAMN) and 5,6-dimethylbenzimidazole (DMB). The chain is Nicotinate-nucleotide--dimethylbenzimidazole phosphoribosyltransferase from Prosthecochloris aestuarii (strain DSM 271 / SK 413).